We begin with the raw amino-acid sequence, 266 residues long: Regulatory protein RecX (266 aa).

Belongs to the RecX family.

Its subcellular location is the cytoplasm. In terms of biological role, modulates RecA activity. This Levilactobacillus brevis (strain ATCC 367 / BCRC 12310 / CIP 105137 / JCM 1170 / LMG 11437 / NCIMB 947 / NCTC 947) (Lactobacillus brevis) protein is Regulatory protein RecX.